Reading from the N-terminus, the 572-residue chain is 2-succinyl-5-enolpyruvyl-6-hydroxy-3-cyclohexene-1-carboxylate synthase (572 aa).

The protein belongs to the TPP enzyme family. MenD subfamily. In terms of assembly, homodimer. The cofactor is Mg(2+). Mn(2+) serves as cofactor. Thiamine diphosphate is required as a cofactor.

It carries out the reaction isochorismate + 2-oxoglutarate + H(+) = 5-enolpyruvoyl-6-hydroxy-2-succinyl-cyclohex-3-ene-1-carboxylate + CO2. Its pathway is quinol/quinone metabolism; 1,4-dihydroxy-2-naphthoate biosynthesis; 1,4-dihydroxy-2-naphthoate from chorismate: step 2/7. It participates in quinol/quinone metabolism; menaquinone biosynthesis. Functionally, catalyzes the thiamine diphosphate-dependent decarboxylation of 2-oxoglutarate and the subsequent addition of the resulting succinic semialdehyde-thiamine pyrophosphate anion to isochorismate to yield 2-succinyl-5-enolpyruvyl-6-hydroxy-3-cyclohexene-1-carboxylate (SEPHCHC). The chain is 2-succinyl-5-enolpyruvyl-6-hydroxy-3-cyclohexene-1-carboxylate synthase from Vibrio campbellii (strain ATCC BAA-1116).